The chain runs to 104 residues: MSSVPASAYLTLAIILFCIGLFGALTKRNTVIVLVCIELMLNAANLNFVAFSKLGLFPNLTGQIFSLFTMAVAAAEAAVGLAILIALYRNRTTVHVDEMDTLKG.

Helical transmembrane passes span 4–24, 31–51, and 67–87; these read VPASAYLTLAIILFCIGLFGA, VIVLVCIELMLNAANLNFVAF, and LFTMAVAAAEAAVGLAILIAL.

This sequence belongs to the complex I subunit 4L family. In terms of assembly, NDH-1 is composed of 14 different subunits. Subunits NuoA, H, J, K, L, M, N constitute the membrane sector of the complex.

The protein localises to the cell membrane. It carries out the reaction a quinone + NADH + 5 H(+)(in) = a quinol + NAD(+) + 4 H(+)(out). Its function is as follows. NDH-1 shuttles electrons from NADH, via FMN and iron-sulfur (Fe-S) centers, to quinones in the respiratory chain. The immediate electron acceptor for the enzyme in this species is believed to be a menaquinone. Couples the redox reaction to proton translocation (for every two electrons transferred, four hydrogen ions are translocated across the cytoplasmic membrane), and thus conserves the redox energy in a proton gradient. The sequence is that of NADH-quinone oxidoreductase subunit K from Bacillus anthracis (strain A0248).